A 1051-amino-acid chain; its full sequence is Helicase POLQ-like (1051 aa).

Residues 1 to 10 (MANKHNLCKK) show a composition bias toward basic residues. Disordered stretches follow at residues 1–28 (MANK…AKRQ) and 61–112 (LFGT…APTD). 2 stretches are compositionally biased toward polar residues: residues 64–78 (TQAT…QSGS) and 89–102 (SFPS…NSAS). The segment covering 103–112 (KPDEASAPTD) has biased composition (basic and acidic residues). The Helicase ATP-binding domain maps to 274–446 (LPAIRQRKNL…FLNADVYTRG (173 aa)). 287 to 294 (LPTSGGKT) is an ATP binding site. The short motif at 391–394 (DELH) is the DEAH box element. Residues 497 to 689 (HLAGLISECA…NEAVGLQSLI (193 aa)) enclose the Helicase C-terminal domain.

Belongs to the helicase family. SKI2 subfamily.

The protein localises to the nucleus. It is found in the chromosome. It carries out the reaction Couples ATP hydrolysis with the unwinding of duplex DNA by translocating in the 3'-5' direction.. The enzyme catalyses ATP + H2O = ADP + phosphate + H(+). Its function is as follows. Single-stranded 3'-5' DNA helicase that plays a key role in homology-driven double-strand break (DSB) repair. Involved in different DSB repair mechanisms that are guided by annealing of extensive stretches of complementary bases at break ends, such as microhomology-mediated end-joining (MMEJ), single-strand annealing (SSA) or synthesis-dependent strand annealing (SDSA). This is Helicase POLQ-like from Drosophila melanogaster (Fruit fly).